We begin with the raw amino-acid sequence, 118 residues long: UPF0344 protein BLi01172/BL01343 (118 aa).

The next 4 helical transmembrane spans lie at 6–26 (ITSW…YSSG), 33–53 (ITHM…AQLF), 62–82 (EYIA…MLLI), and 89–109 (AATG…VLGL).

The protein belongs to the UPF0344 family.

It is found in the cell membrane. This is UPF0344 protein BLi01172/BL01343 from Bacillus licheniformis (strain ATCC 14580 / DSM 13 / JCM 2505 / CCUG 7422 / NBRC 12200 / NCIMB 9375 / NCTC 10341 / NRRL NRS-1264 / Gibson 46).